The chain runs to 446 residues: Na(+)-translocating NADH-quinone reductase subunit A (446 aa).

This sequence belongs to the NqrA family. In terms of assembly, composed of six subunits; NqrA, NqrB, NqrC, NqrD, NqrE and NqrF.

The catalysed reaction is a ubiquinone + n Na(+)(in) + NADH + H(+) = a ubiquinol + n Na(+)(out) + NAD(+). Functionally, NQR complex catalyzes the reduction of ubiquinone-1 to ubiquinol by two successive reactions, coupled with the transport of Na(+) ions from the cytoplasm to the periplasm. NqrA to NqrE are probably involved in the second step, the conversion of ubisemiquinone to ubiquinol. The chain is Na(+)-translocating NADH-quinone reductase subunit A from Vibrio atlanticus (strain LGP32) (Vibrio splendidus (strain Mel32)).